A 582-amino-acid chain; its full sequence is 5-aminolevulinate synthase, erythroid-specific, mitochondrial (582 aa).

Arg158 lines the succinyl-CoA pocket. The pyridoxal 5'-phosphate site is built by Cys253 and Phe254. 2 residues coordinate succinyl-CoA: Ser275 and Arg294. Pyridoxal 5'-phosphate-binding residues include Ser327, His355, and Thr383. Lys386 is an active-site residue. Position 386 is an N6-(pyridoxal phosphate)lysine (Lys386). Residues Thr415 and Thr416 each contribute to the pyridoxal 5'-phosphate site. Thr503 is a binding site for succinyl-CoA.

Belongs to the class-II pyridoxal-phosphate-dependent aminotransferase family. As to quaternary structure, homodimer. It depends on pyridoxal 5'-phosphate as a cofactor.

It is found in the mitochondrion inner membrane. It carries out the reaction succinyl-CoA + glycine + H(+) = 5-aminolevulinate + CO2 + CoA. It participates in porphyrin-containing compound metabolism; protoporphyrin-IX biosynthesis; 5-aminolevulinate from glycine: step 1/1. Functionally, catalyzes the pyridoxal 5'-phosphate (PLP)-dependent condensation of succinyl-CoA and glycine to form aminolevulinic acid (ALA), with CoA and CO2 as by-products. Contributes significantly to heme formation during erythropoiesis. In Opsanus tau (Oyster toadfish), this protein is 5-aminolevulinate synthase, erythroid-specific, mitochondrial (alas2).